The primary structure comprises 76 residues: Large ribosomal subunit protein eL20 (76 aa).

The protein belongs to the eukaryotic ribosomal protein eL20 family. As to quaternary structure, part of the 50S ribosomal subunit. Binds 23S rRNA.

The polypeptide is Large ribosomal subunit protein eL20 (Methanocaldococcus jannaschii (strain ATCC 43067 / DSM 2661 / JAL-1 / JCM 10045 / NBRC 100440) (Methanococcus jannaschii)).